The chain runs to 356 residues: 3-dehydroquinate synthase (356 aa).

NAD(+) is bound by residues 106–110 (GVVGD), 130–131 (TS), lysine 143, lysine 152, and 170–173 (FLKT). 3 residues coordinate Zn(2+): glutamate 185, histidine 246, and histidine 263.

Belongs to the sugar phosphate cyclases superfamily. Dehydroquinate synthase family. The cofactor is NAD(+). Co(2+) serves as cofactor. Zn(2+) is required as a cofactor.

It is found in the cytoplasm. The catalysed reaction is 7-phospho-2-dehydro-3-deoxy-D-arabino-heptonate = 3-dehydroquinate + phosphate. It participates in metabolic intermediate biosynthesis; chorismate biosynthesis; chorismate from D-erythrose 4-phosphate and phosphoenolpyruvate: step 2/7. Its function is as follows. Catalyzes the conversion of 3-deoxy-D-arabino-heptulosonate 7-phosphate (DAHP) to dehydroquinate (DHQ). The polypeptide is 3-dehydroquinate synthase (Clostridium acetobutylicum (strain ATCC 824 / DSM 792 / JCM 1419 / IAM 19013 / LMG 5710 / NBRC 13948 / NRRL B-527 / VKM B-1787 / 2291 / W)).